The chain runs to 154 residues: Myoglobin (154 aa).

One can recognise a Globin domain in the interval 2-148; sequence GLSDGEWQLV…FRNDIAAKYK (147 aa). Ser-4 is subject to Phosphoserine. A nitrite-binding site is contributed by His-65. O2 is bound at residue His-65. Position 68 is a phosphothreonine (Thr-68). His-94 contacts heme b.

Monomer.

The protein localises to the cytoplasm. It localises to the sarcoplasm. The enzyme catalyses Fe(III)-heme b-[protein] + nitric oxide + H2O = Fe(II)-heme b-[protein] + nitrite + 2 H(+). It carries out the reaction H2O2 + AH2 = A + 2 H2O. Functionally, monomeric heme protein which primary function is to store oxygen and facilitate its diffusion within muscle tissues. Reversibly binds oxygen through a pentacoordinated heme iron and enables its timely and efficient release as needed during periods of heightened demand. Depending on the oxidative conditions of tissues and cells, and in addition to its ability to bind oxygen, it also has a nitrite reductase activity whereby it regulates the production of bioactive nitric oxide. Under stress conditions, like hypoxia and anoxia, it also protects cells against reactive oxygen species thanks to its pseudoperoxidase activity. The polypeptide is Myoglobin (Hystrix cristata (North African crested porcupine)).